Consider the following 252-residue polypeptide: Geranylgeranylglyceryl phosphate synthase (252 aa).

Mg(2+)-binding residues include Asp-26 and Ser-55. Sn-glycerol 1-phosphate contacts are provided by residues Tyr-174–Gly-180, Gly-205–Gly-206, and Gly-227–Thr-228.

Belongs to the GGGP/HepGP synthase family. Group II subfamily. Mg(2+) serves as cofactor.

It localises to the cytoplasm. The catalysed reaction is sn-glycerol 1-phosphate + (2E,6E,10E)-geranylgeranyl diphosphate = sn-3-O-(geranylgeranyl)glycerol 1-phosphate + diphosphate. It participates in membrane lipid metabolism; glycerophospholipid metabolism. Its function is as follows. Prenyltransferase that catalyzes the transfer of the geranylgeranyl moiety of geranylgeranyl diphosphate (GGPP) to the C3 hydroxyl of sn-glycerol-1-phosphate (G1P). This reaction is the first ether-bond-formation step in the biosynthesis of archaeal membrane lipids. The sequence is that of Geranylgeranylglyceryl phosphate synthase from Thermococcus gammatolerans (strain DSM 15229 / JCM 11827 / EJ3).